The sequence spans 293 residues: Coatomer subunit epsilon-2 (293 aa).

This sequence belongs to the COPE family. Oligomeric complex that consists of at least the alpha, beta, beta', gamma, delta, epsilon and zeta subunits.

It is found in the cytoplasm. It localises to the golgi apparatus membrane. The protein resides in the cytoplasmic vesicle. The protein localises to the COPI-coated vesicle membrane. Functionally, the coatomer is a cytosolic protein complex that binds to dilysine motifs and reversibly associates with Golgi non-clathrin-coated vesicles, which further mediate biosynthetic protein transport from the ER, via the Golgi up to the trans Golgi network. The coatomer complex is required for budding from Golgi membranes, and is essential for the retrograde Golgi-to-ER transport of dilysine-tagged proteins. The polypeptide is Coatomer subunit epsilon-2 (Arabidopsis thaliana (Mouse-ear cress)).